We begin with the raw amino-acid sequence, 155 residues long: Endoribonuclease YbeY (155 aa).

H114, H118, and H124 together coordinate Zn(2+).

The protein belongs to the endoribonuclease YbeY family. Requires Zn(2+) as cofactor.

It localises to the cytoplasm. Functionally, single strand-specific metallo-endoribonuclease involved in late-stage 70S ribosome quality control and in maturation of the 3' terminus of the 16S rRNA. This chain is Endoribonuclease YbeY, found in Shigella dysenteriae serotype 1 (strain Sd197).